Here is a 142-residue protein sequence, read N- to C-terminus: Putative nickel-responsive regulator (142 aa).

Ni(2+) contacts are provided by H77, H88, H90, and C96.

Belongs to the transcriptional regulatory CopG/NikR family. Homotetramer. Ni(2+) serves as cofactor.

In terms of biological role, transcriptional regulator. The sequence is that of Putative nickel-responsive regulator from Halobacterium salinarum (strain ATCC 700922 / JCM 11081 / NRC-1) (Halobacterium halobium).